The sequence spans 332 residues: Glycerol-3-phosphate dehydrogenase [NAD(P)+] (332 aa).

NADPH-binding residues include tryptophan 11, arginine 30, and lysine 108. Sn-glycerol 3-phosphate contacts are provided by lysine 108, glycine 137, and serine 139. Position 141 (alanine 141) interacts with NADPH. 5 residues coordinate sn-glycerol 3-phosphate: lysine 192, aspartate 245, serine 255, arginine 256, and asparagine 257. Lysine 192 serves as the catalytic Proton acceptor. Arginine 256 provides a ligand contact to NADPH. NADPH contacts are provided by valine 280 and glutamate 282.

This sequence belongs to the NAD-dependent glycerol-3-phosphate dehydrogenase family.

It localises to the cytoplasm. The catalysed reaction is sn-glycerol 3-phosphate + NAD(+) = dihydroxyacetone phosphate + NADH + H(+). The enzyme catalyses sn-glycerol 3-phosphate + NADP(+) = dihydroxyacetone phosphate + NADPH + H(+). The protein operates within membrane lipid metabolism; glycerophospholipid metabolism. Its function is as follows. Catalyzes the reduction of the glycolytic intermediate dihydroxyacetone phosphate (DHAP) to sn-glycerol 3-phosphate (G3P), the key precursor for phospholipid synthesis. The chain is Glycerol-3-phosphate dehydrogenase [NAD(P)+] from Burkholderia cenocepacia (strain HI2424).